A 112-amino-acid polypeptide reads, in one-letter code: Colipase (112 aa).

A signal peptide spans 1-17; the sequence is MEKVLALLLVTLTVAYA. The propeptide at 18-22 is enterostatin, activation peptide; it reads VPDPR. Intrachain disulfides connect Cys-34–Cys-45, Cys-40–Cys-56, Cys-44–Cys-78, Cys-66–Cys-86, and Cys-80–Cys-104.

It belongs to the colipase family. In terms of assembly, forms a 1:1 stoichiometric complex with pancreatic lipase. In terms of tissue distribution, expressed by the pancreas.

It is found in the secreted. Its function is as follows. Colipase is a cofactor of pancreatic lipase. It allows the lipase to anchor itself to the lipid-water interface. Without colipase the enzyme is washed off by bile salts, which have an inhibitory effect on the lipase. Functionally, enterostatin has a biological activity as a satiety signal. The sequence is that of Colipase (CLPS) from Sus scrofa (Pig).